The primary structure comprises 467 residues: ATP synthase subunit beta (467 aa).

Position 152–159 (152–159 (GGAGVGKT)) interacts with ATP.

It belongs to the ATPase alpha/beta chains family. In terms of assembly, F-type ATPases have 2 components, CF(1) - the catalytic core - and CF(0) - the membrane proton channel. CF(1) has five subunits: alpha(3), beta(3), gamma(1), delta(1), epsilon(1). CF(0) has three main subunits: a(1), b(2) and c(9-12). The alpha and beta chains form an alternating ring which encloses part of the gamma chain. CF(1) is attached to CF(0) by a central stalk formed by the gamma and epsilon chains, while a peripheral stalk is formed by the delta and b chains.

The protein resides in the cell inner membrane. The enzyme catalyses ATP + H2O + 4 H(+)(in) = ADP + phosphate + 5 H(+)(out). Its function is as follows. Produces ATP from ADP in the presence of a proton gradient across the membrane. The catalytic sites are hosted primarily by the beta subunits. In Wolinella succinogenes (strain ATCC 29543 / DSM 1740 / CCUG 13145 / JCM 31913 / LMG 7466 / NCTC 11488 / FDC 602W) (Vibrio succinogenes), this protein is ATP synthase subunit beta.